Reading from the N-terminus, the 211-residue chain is Thiamine-phosphate synthase (211 aa).

Residues 38–42 (QLREK) and Asn70 contribute to the 4-amino-2-methyl-5-(diphosphooxymethyl)pyrimidine site. Mg(2+) is bound by residues Asp71 and Asp90. A 4-amino-2-methyl-5-(diphosphooxymethyl)pyrimidine-binding site is contributed by Ser109. 135–137 (TST) is a 2-[(2R,5Z)-2-carboxy-4-methylthiazol-5(2H)-ylidene]ethyl phosphate binding site. Residue Lys138 coordinates 4-amino-2-methyl-5-(diphosphooxymethyl)pyrimidine. 2-[(2R,5Z)-2-carboxy-4-methylthiazol-5(2H)-ylidene]ethyl phosphate is bound by residues Gly165 and 185 to 186 (IS).

The protein belongs to the thiamine-phosphate synthase family. It depends on Mg(2+) as a cofactor.

It catalyses the reaction 2-[(2R,5Z)-2-carboxy-4-methylthiazol-5(2H)-ylidene]ethyl phosphate + 4-amino-2-methyl-5-(diphosphooxymethyl)pyrimidine + 2 H(+) = thiamine phosphate + CO2 + diphosphate. The enzyme catalyses 2-(2-carboxy-4-methylthiazol-5-yl)ethyl phosphate + 4-amino-2-methyl-5-(diphosphooxymethyl)pyrimidine + 2 H(+) = thiamine phosphate + CO2 + diphosphate. The catalysed reaction is 4-methyl-5-(2-phosphooxyethyl)-thiazole + 4-amino-2-methyl-5-(diphosphooxymethyl)pyrimidine + H(+) = thiamine phosphate + diphosphate. It functions in the pathway cofactor biosynthesis; thiamine diphosphate biosynthesis; thiamine phosphate from 4-amino-2-methyl-5-diphosphomethylpyrimidine and 4-methyl-5-(2-phosphoethyl)-thiazole: step 1/1. Its function is as follows. Condenses 4-methyl-5-(beta-hydroxyethyl)thiazole monophosphate (THZ-P) and 2-methyl-4-amino-5-hydroxymethyl pyrimidine pyrophosphate (HMP-PP) to form thiamine monophosphate (TMP). The chain is Thiamine-phosphate synthase from Clostridium acetobutylicum (strain ATCC 824 / DSM 792 / JCM 1419 / IAM 19013 / LMG 5710 / NBRC 13948 / NRRL B-527 / VKM B-1787 / 2291 / W).